The primary structure comprises 265 residues: Sulfur carrier protein FdhD (265 aa).

The active-site Cysteine persulfide intermediate is Cys107.

Belongs to the FdhD family.

Its subcellular location is the cytoplasm. Functionally, required for formate dehydrogenase (FDH) activity. Acts as a sulfur carrier protein that transfers sulfur from IscS to the molybdenum cofactor prior to its insertion into FDH. In Staphylococcus aureus (strain MRSA252), this protein is Sulfur carrier protein FdhD.